The sequence spans 146 residues: Transcriptional regulator MraZ (146 aa).

SpoVT-AbrB domains lie at 4 to 46 and 75 to 118; these read SYEK…SKKS and TIEV…SKEK.

Belongs to the MraZ family. As to quaternary structure, forms oligomers.

It is found in the cytoplasm. The protein resides in the nucleoid. This Mycoplasma mobile (strain ATCC 43663 / 163K / NCTC 11711) (Mesomycoplasma mobile) protein is Transcriptional regulator MraZ.